Reading from the N-terminus, the 376-residue chain is D-alanine--D-alanine ligase B (376 aa).

Positions 155-361 constitute an ATP-grasp domain; it reads KRLMRDAGLP…QTDLMDKLIA (207 aa). 184 to 239 provides a ligand contact to ATP; sequence AALGTPDLFVKPANLGSSVGVSRARSEEEFAASCALAFRYDRKILVEQALNGAREI. Mg(2+)-binding residues include Asp316, Glu328, and Asn330.

This sequence belongs to the D-alanine--D-alanine ligase family. Mg(2+) is required as a cofactor. Mn(2+) serves as cofactor.

Its subcellular location is the cytoplasm. The enzyme catalyses 2 D-alanine + ATP = D-alanyl-D-alanine + ADP + phosphate + H(+). Its pathway is cell wall biogenesis; peptidoglycan biosynthesis. In terms of biological role, cell wall formation. The chain is D-alanine--D-alanine ligase B from Bradyrhizobium diazoefficiens (strain JCM 10833 / BCRC 13528 / IAM 13628 / NBRC 14792 / USDA 110).